A 322-amino-acid chain; its full sequence is 4-hydroxy-3-methylbut-2-enyl diphosphate reductase 1 (322 aa).

Cys18 serves as a coordination point for [4Fe-4S] cluster. (2E)-4-hydroxy-3-methylbut-2-enyl diphosphate contacts are provided by His47 and His82. The dimethylallyl diphosphate site is built by His47 and His82. Isopentenyl diphosphate-binding residues include His47 and His82. Position 104 (Cys104) interacts with [4Fe-4S] cluster. His132 contacts (2E)-4-hydroxy-3-methylbut-2-enyl diphosphate. His132 contributes to the dimethylallyl diphosphate binding site. His132 is a binding site for isopentenyl diphosphate. Glu134 acts as the Proton donor in catalysis. Thr173 is a (2E)-4-hydroxy-3-methylbut-2-enyl diphosphate binding site. Cys203 contributes to the [4Fe-4S] cluster binding site. Positions 231, 232, 233, and 276 each coordinate (2E)-4-hydroxy-3-methylbut-2-enyl diphosphate. The dimethylallyl diphosphate site is built by Ser231, Ser232, Asn233, and Ser276. Residues Ser231, Ser232, Asn233, and Ser276 each contribute to the isopentenyl diphosphate site.

This sequence belongs to the IspH family. [4Fe-4S] cluster serves as cofactor.

It carries out the reaction isopentenyl diphosphate + 2 oxidized [2Fe-2S]-[ferredoxin] + H2O = (2E)-4-hydroxy-3-methylbut-2-enyl diphosphate + 2 reduced [2Fe-2S]-[ferredoxin] + 2 H(+). The catalysed reaction is dimethylallyl diphosphate + 2 oxidized [2Fe-2S]-[ferredoxin] + H2O = (2E)-4-hydroxy-3-methylbut-2-enyl diphosphate + 2 reduced [2Fe-2S]-[ferredoxin] + 2 H(+). The protein operates within isoprenoid biosynthesis; dimethylallyl diphosphate biosynthesis; dimethylallyl diphosphate from (2E)-4-hydroxy-3-methylbutenyl diphosphate: step 1/1. It participates in isoprenoid biosynthesis; isopentenyl diphosphate biosynthesis via DXP pathway; isopentenyl diphosphate from 1-deoxy-D-xylulose 5-phosphate: step 6/6. Catalyzes the conversion of 1-hydroxy-2-methyl-2-(E)-butenyl 4-diphosphate (HMBPP) into a mixture of isopentenyl diphosphate (IPP) and dimethylallyl diphosphate (DMAPP). Acts in the terminal step of the DOXP/MEP pathway for isoprenoid precursor biosynthesis. This Bradyrhizobium diazoefficiens (strain JCM 10833 / BCRC 13528 / IAM 13628 / NBRC 14792 / USDA 110) protein is 4-hydroxy-3-methylbut-2-enyl diphosphate reductase 1.